We begin with the raw amino-acid sequence, 482 residues long: Proline--tRNA ligase (482 aa).

This sequence belongs to the class-II aminoacyl-tRNA synthetase family. ProS type 3 subfamily. In terms of assembly, homodimer.

It is found in the cytoplasm. The enzyme catalyses tRNA(Pro) + L-proline + ATP = L-prolyl-tRNA(Pro) + AMP + diphosphate. Catalyzes the attachment of proline to tRNA(Pro) in a two-step reaction: proline is first activated by ATP to form Pro-AMP and then transferred to the acceptor end of tRNA(Pro). In Thermofilum pendens (strain DSM 2475 / Hrk 5), this protein is Proline--tRNA ligase.